Here is a 289-residue protein sequence, read N- to C-terminus: Pteridine reductase 1 (289 aa).

Position 14–41 (Gly14–Ser41) interacts with NADP(+). Substrate is bound at residue Ser176. Residue Tyr195 is the Proton acceptor of the active site. Tyr195–Lys199 is a binding site for NADP(+).

It belongs to the short-chain dehydrogenases/reductases (SDR) family. Homotetramer.

It carries out the reaction (6R)-L-erythro-5,6,7,8-tetrahydrobiopterin + 2 NADP(+) = L-erythro-biopterin + 2 NADPH + 2 H(+). It functions in the pathway cofactor biosynthesis; tetrahydrobiopterin biosynthesis; tetrahydrobiopterin from biopterin: step 1/1. In terms of biological role, exhibits a NADPH-dependent biopterin reductase activity. Has good activity with folate and significant activity with dihydrofolate and dihydrobiopterin, but not with quinonoid dihydrobiopterin. Confers resistance to methotrexate (MTX). This Leishmania tarentolae (Sauroleishmania tarentolae) protein is Pteridine reductase 1 (PTR1).